We begin with the raw amino-acid sequence, 312 residues long: Putative ring-cleaving dioxygenase MhqO (312 aa).

2 consecutive VOC domains span residues 7–131 (GIHH…IVER) and 152–269 (GFGG…IATD). Fe cation is bound by residues H10, H217, and E265.

The protein belongs to the extradiol ring-cleavage dioxygenase family. Fe(2+) serves as cofactor.

The protein resides in the cytoplasm. In terms of biological role, putative ring-cleavage dioxygenase that may contribute to the degradation of aromatic compounds. The protein is Putative ring-cleaving dioxygenase MhqO (mhqO) of Bacillus subtilis (strain 168).